Consider the following 364-residue polypeptide: Cobalt-precorrin-5B C(1)-methyltransferase (364 aa).

Belongs to the CbiD family.

It catalyses the reaction Co-precorrin-5B + S-adenosyl-L-methionine = Co-precorrin-6A + S-adenosyl-L-homocysteine. It functions in the pathway cofactor biosynthesis; adenosylcobalamin biosynthesis; cob(II)yrinate a,c-diamide from sirohydrochlorin (anaerobic route): step 6/10. Catalyzes the methylation of C-1 in cobalt-precorrin-5B to form cobalt-precorrin-6A. This chain is Cobalt-precorrin-5B C(1)-methyltransferase, found in Pseudomonas putida (strain GB-1).